Here is a 128-residue protein sequence, read N- to C-terminus: Large ribosomal subunit protein bL19 (128 aa).

Belongs to the bacterial ribosomal protein bL19 family.

In terms of biological role, this protein is located at the 30S-50S ribosomal subunit interface and may play a role in the structure and function of the aminoacyl-tRNA binding site. The polypeptide is Large ribosomal subunit protein bL19 (Paracidovorax citrulli (strain AAC00-1) (Acidovorax citrulli)).